Reading from the N-terminus, the 299-residue chain is Taste receptor type 2 member 1 (299 aa).

The Extracellular portion of the chain corresponds to 1-9; it reads MLESHLIIY. Residues 10-30 form a helical membrane-spanning segment; that stretch reads FLLAVIQFLLGTFTNGIIVVV. At 31–55 the chain is on the cytoplasmic side; that stretch reads NGIDLIKHRKMAPLDLLLSCLAVSR. Residues 56–76 form a helical membrane-spanning segment; sequence IFLQLFIFYINVVVIFLIEFI. Residues 77 to 81 lie on the Extracellular side of the membrane; that stretch reads TCSAS. Residues 82–102 traverse the membrane as a helical segment; it reads CAFLVFVNELELWLATWLGVF. Residues 103–124 lie on the Cytoplasmic side of the membrane; that stretch reads YCAKVASVLHPLFIWLKMRISK. A helical transmembrane segment spans residues 125 to 145; the sequence is SVPWMILGSLLYVSMICIFHI. The Extracellular segment spans residues 146 to 178; sequence KYTGFMVPYFLRNLFFQNATIQTEVKQAIQIFS. N163 is a glycosylation site (N-linked (GlcNAc...) asparagine). The chain crosses the membrane as a helical span at residues 179 to 199; it reads FVAELLVPLLIFLVAVLLLIF. Topologically, residues 200-222 are cytoplasmic; the sequence is SLGRHTRQMRNTVAGSRVPGRGA. Residues 223–243 form a helical membrane-spanning segment; it reads HISALLSILSFLILYISHYLI. Residues 244–257 are Extracellular-facing; that stretch reads KTFLSSLKFHVKRF. A helical transmembrane segment spans residues 258–278; sequence VFLFCILVIGTYPSGHSLILI. Topologically, residues 279–299 are cytoplasmic; that stretch reads LGNPKLKQNTKKFLCHSKCCQ.

Belongs to the G-protein coupled receptor T2R family.

It localises to the membrane. Its function is as follows. Receptor that may play a role in the perception of bitterness and is gustducin-linked. May play a role in sensing the chemical composition of the gastrointestinal content. The activity of this receptor may stimulate alpha gustducin, mediate PLC-beta-2 activation and lead to the gating of TRPM5. The protein is Taste receptor type 2 member 1 (TAS2R1) of Chlorocebus aethiops (Green monkey).